Here is a 178-residue protein sequence, read N- to C-terminus: Actin-related protein 2/3 complex subunit 3-B (178 aa).

It belongs to the ARPC3 family. In terms of assembly, component of the Arp2/3 complex composed of actr2/arp2, actr3/arp3, arpc1 (arpc1a or arpc1b), arpc2, arpc3, arpc4 and arpc5.

The protein resides in the cytoplasm. Its subcellular location is the cytoskeleton. It is found in the cell projection. The protein localises to the nucleus. Its function is as follows. Component of the Arp2/3 complex, a multiprotein complex that mediates actin polymerization upon stimulation by nucleation-promoting factor (NPF). The Arp2/3 complex mediates the formation of branched actin networks in the cytoplasm, providing the force for cell motility. In addition to its role in the cytoplasmic cytoskeleton, the Arp2/3 complex also promotes actin polymerization in the nucleus, thereby regulating gene transcription and repair of damaged DNA. The Arp2/3 complex promotes homologous recombination (HR) repair in response to DNA damage by promoting nuclear actin polymerization, leading to drive motility of double-strand breaks (DSBs). The chain is Actin-related protein 2/3 complex subunit 3-B (arpc3-b) from Xenopus laevis (African clawed frog).